The primary structure comprises 310 residues: Tagatose-6-phosphate kinase (310 aa).

This sequence belongs to the carbohydrate kinase PfkB family. LacC subfamily.

The catalysed reaction is D-tagatofuranose 6-phosphate + ATP = D-tagatofuranose 1,6-bisphosphate + ADP + H(+). Its pathway is carbohydrate metabolism; D-tagatose 6-phosphate degradation; D-glyceraldehyde 3-phosphate and glycerone phosphate from D-tagatose 6-phosphate: step 1/2. This chain is Tagatose-6-phosphate kinase, found in Staphylococcus aureus (strain bovine RF122 / ET3-1).